Here is a 332-residue protein sequence, read N- to C-terminus: Methionine synthase (332 aa).

Residues histidine 211, cysteine 213, and cysteine 296 each contribute to the Zn(2+) site.

Belongs to the archaeal MetE family. The cofactor is Zn(2+).

Its pathway is amino-acid biosynthesis; L-methionine biosynthesis via de novo pathway. In terms of biological role, catalyzes the transfer of a methyl group to L-homocysteine resulting in methionine formation. The physiological methyl donor is unknown. This is Methionine synthase from Saccharolobus islandicus (strain Y.N.15.51 / Yellowstone #2) (Sulfolobus islandicus).